A 299-amino-acid chain; its full sequence is Apolipoprotein E (299 aa).

The first 18 residues, 1-18 (MKVLCTVLVVTLLAGCQA), serve as a signal peptide directing secretion. Residues 74–245 (VLMEDTMKAV…RLEEVREQME (172 aa)) form an 8 X 22 AA approximate tandem repeats region. Tandem repeats lie at residues 75–95 (LMED…QELV), 96–117 (PMAE…ARLG), 118–139 (ADME…AMLG), 140–161 (QSAE…KKLL), 162–183 (RDAE…EGAE), 184–206 (RSVS…RAAL), 207–225 (TSQP…LRGR), and 224–242 (GRLE…EVRE). Met137 is modified (methionine sulfoxide). Ser141 is subject to Phosphoserine. The interval 152 to 162 (HLRKLRKKLLR) is LDL and other lipoprotein receptors binding. 156–159 (LRKK) is a binding site for heparin. Positions 205–273 (ALTSQPLQER…GWFEPMVEDM (69 aa)) are lipid-binding and lipoprotein association. 219–226 (GKRLRGRL) contacts heparin. Positions 261 to 273 (RLKGWFEPMVEDM) are specificity for association with VLDL.

Belongs to the apolipoprotein A1/A4/E family. Homotetramer. May interact with ABCA1; functionally associated with ABCA1 in the biogenesis of HDLs. May interact with APP/A4 amyloid-beta peptide; the interaction is extremely stable in vitro but its physiological significance is unclear. May interact with MAPT. May interact with MAP2. In the cerebrospinal fluid, interacts with secreted SORL1. Interacts with PMEL; this allows the loading of PMEL luminal fragment on ILVs to induce fibril nucleation. In terms of processing, APOE exists as multiple glycosylated and sialylated glycoforms within cells and in plasma. The extent of glycosylation and sialylation are tissue and context specific. Post-translationally, glycated in plasma VLDL. Phosphorylated by FAM20C in the extracellular medium.

The protein resides in the secreted. Its subcellular location is the extracellular space. It localises to the extracellular matrix. The protein localises to the extracellular vesicle. It is found in the endosome. The protein resides in the multivesicular body. Functionally, APOE is an apolipoprotein, a protein associating with lipid particles, that mainly functions in lipoprotein-mediated lipid transport between organs via the plasma and interstitial fluids. APOE is a core component of plasma lipoproteins and is involved in their production, conversion and clearance. Apolipoproteins are amphipathic molecules that interact both with lipids of the lipoprotein particle core and the aqueous environment of the plasma. As such, APOE associates with chylomicrons, chylomicron remnants, very low density lipoproteins (VLDL) and intermediate density lipoproteins (IDL) but shows a preferential binding to high-density lipoproteins (HDL). It also binds a wide range of cellular receptors including the LDL receptor/LDLR, the LDL receptor-related proteins LRP1, LRP2 and LRP8 and the very low-density lipoprotein receptor/VLDLR that mediate the cellular uptake of the APOE-containing lipoprotein particles. Finally, APOE also has a heparin-binding activity and binds heparan-sulfate proteoglycans on the surface of cells, a property that supports the capture and the receptor-mediated uptake of APOE-containing lipoproteins by cells. A main function of APOE is to mediate lipoprotein clearance through the uptake of chylomicrons, VLDLs, and HDLs by hepatocytes. APOE is also involved in the biosynthesis by the liver of VLDLs as well as their uptake by peripheral tissues ensuring the delivery of triglycerides and energy storage in muscle, heart and adipose tissues. By participating in the lipoprotein-mediated distribution of lipids among tissues, APOE plays a critical role in plasma and tissues lipid homeostasis. APOE is also involved in two steps of reverse cholesterol transport, the HDLs-mediated transport of cholesterol from peripheral tissues to the liver, and thereby plays an important role in cholesterol homeostasis. First, it is functionally associated with ABCA1 in the biogenesis of HDLs in tissues. Second, it is enriched in circulating HDLs and mediates their uptake by hepatocytes. APOE also plays an important role in lipid transport in the central nervous system, regulating neuron survival and sprouting. The protein is Apolipoprotein E (APOE) of Ctenomys sociabilis (Social tuco-tuco).